Reading from the N-terminus, the 299-residue chain is Foldase protein PrsA (299 aa).

The N-terminal stretch at 1 to 19 (MKKWTIAASLSIGVLALSA) is a signal peptide. Cysteine 20 is lipidated: N-palmitoyl cysteine. Cysteine 20 is lipidated: S-diacylglycerol cysteine. Residues 137 to 227 (NTEIQAQHIL…HGTHIIKVND (91 aa)) enclose the PpiC domain.

It belongs to the PrsA family.

The protein resides in the cell membrane. The catalysed reaction is [protein]-peptidylproline (omega=180) = [protein]-peptidylproline (omega=0). Its function is as follows. Plays a major role in protein secretion by helping the post-translocational extracellular folding of several secreted proteins. This Oceanobacillus iheyensis (strain DSM 14371 / CIP 107618 / JCM 11309 / KCTC 3954 / HTE831) protein is Foldase protein PrsA.